A 679-amino-acid polypeptide reads, in one-letter code: Enzymatic polyprotein (679 aa).

A protease region spans residues 40–130; that stretch reads LHCFVDTGAS…LYEPFIQFTD (91 aa). Residue Asp-45 is part of the active site. The Reverse transcriptase domain occupies 272–452; that stretch reads LKVIKPSKSP…KKINFLGLEI (181 aa).

This sequence belongs to the caulimoviridae enzymatic polyprotein family.

It carries out the reaction DNA(n) + a 2'-deoxyribonucleoside 5'-triphosphate = DNA(n+1) + diphosphate. Encodes for at least two polypeptides: protease (PR) and reverse transcriptase (RT). The protease processes the polyprotein in cis. Reverse transcriptase is multifunctional enzyme that converts the viral RNA genome into dsDNA in viral cytoplasmic capsids. This enzyme displays a DNA polymerase activity that can copy either DNA or RNA templates, and a ribonuclease H (RNase H) activity that cleaves the RNA strand of RNA-DNA heteroduplexes in a partially processive 3'- to 5'-endonucleasic mode. Neo-synthesized pregenomic RNA (pgRNA) are encapsidated, and reverse-transcribed inside the nucleocapsid. Partial (+)DNA is synthesized from the (-)DNA template and generates the relaxed circular DNA (RC-DNA) genome. After budding and infection, the RC-DNA migrates in the nucleus, and is converted into a plasmid-like covalently closed circular DNA (cccDNA). The protein is Enzymatic polyprotein of Cauliflower mosaic virus (strain CM-1841) (CaMV).